We begin with the raw amino-acid sequence, 307 residues long: Malate dehydrogenase (307 aa).

NAD(+) is bound by residues 8–13 and D33; that span reads GAGRVG. 2 residues coordinate substrate: R82 and R88. NAD(+) contacts are provided by residues N95 and 118-120; that span reads VSN. Residues N120 and R151 each coordinate substrate. H175 acts as the Proton acceptor in catalysis.

This sequence belongs to the LDH/MDH superfamily. MDH type 3 family.

It catalyses the reaction (S)-malate + NAD(+) = oxaloacetate + NADH + H(+). Its function is as follows. Catalyzes the reversible oxidation of malate to oxaloacetate. This is Malate dehydrogenase from Thioalkalivibrio sulfidiphilus (strain HL-EbGR7).